Reading from the N-terminus, the 147-residue chain is Protein SOB FIVE-LIKE 2 (147 aa).

Residues 18–23 (SGWTMY) carry the SOFL-A motif. The tract at residues 32-147 (HHSEVVYEEE…ASRVKVSKTK (116 aa)) is disordered. The span at 37-77 (VYEEEDDGFSVKEVDDDGDGDEDDDDDDDDDSSNNESDDSM) shows a compositional bias: acidic residues. Residues 76-85 (SMTSDASSWP) carry the SOFL-B motif. Over residues 78 to 93 (TSDASSWPSTHQPPRS) the composition is skewed to polar residues. Low complexity predominate over residues 96 to 106 (NHAAAKNSNAK). Residues 114–131 (NRVRDRFSDEGEESELKA) are compositionally biased toward basic and acidic residues.

This sequence belongs to the SOFL plant protein family. As to expression, predominantly expressed in the vascular tissues of seedlings, developing leaves, flowers and siliques, but barely detectable in roots and stems.

It is found in the cytoplasm. Its subcellular location is the nucleus. Functionally, involved in cytokinin-mediated development. Together with SOFL2, triggers the endogenous content of specific bioactive cytokinins derived from the biosynthetic intermediates trans-zeatin riboside monophosphate (tZRMP) and N(6)-(Delta(2)-isopentenyl)adenosine monophosphate (iPRMP) such as N-glucosides trans-zeatin 7-glucoside (tZ7G), cis-zeatin 7-glucoside (cZ7G) and N(6)-(Delta(2)-isopentenyl)adenine 7-glucoside (iP7G). This is Protein SOB FIVE-LIKE 2 from Arabidopsis thaliana (Mouse-ear cress).